A 378-amino-acid polypeptide reads, in one-letter code: Ribosomal RNA large subunit methyltransferase G (378 aa).

The protein belongs to the methyltransferase superfamily. RlmG family.

It localises to the cytoplasm. The enzyme catalyses guanosine(1835) in 23S rRNA + S-adenosyl-L-methionine = N(2)-methylguanosine(1835) in 23S rRNA + S-adenosyl-L-homocysteine + H(+). Its function is as follows. Specifically methylates the guanine in position 1835 (m2G1835) of 23S rRNA. This Escherichia coli O1:K1 / APEC protein is Ribosomal RNA large subunit methyltransferase G.